A 548-amino-acid chain; its full sequence is Leucine-rich repeat-containing protein 56 (548 aa).

LRR repeat units follow at residues 94–115, 117–138, 139–160, 161–182, and 186–206; these read NLIQ…GTSL, QLQV…GSFL, ALKE…CLLE, QLEV…RYLQ, and RLTT…PGPS. Positions 207 to 249 constitute an LRRCT domain; the sequence is NKAPQDYNYRAEVKKLIPQLHILDEVPTTCTNLPAPQKLSQDW. Residues 405–433 are disordered; sequence LTHVQAQDPQKAPIEQEDQTGPKTSLTPL.

It belongs to the LRRC56 family. In terms of assembly, interacts with IFT88.

The protein resides in the cell projection. The protein localises to the cilium. In terms of biological role, required for the assembly of dynein arms. The sequence is that of Leucine-rich repeat-containing protein 56 (Lrrc56) from Rattus norvegicus (Rat).